A 450-amino-acid polypeptide reads, in one-letter code: Cysteine protease ATG4C (450 aa).

Residue Cys-112 is the Nucleophile of the active site. Residues Asp-336 and His-338 contribute to the active site.

The protein belongs to the peptidase C54 family.

It localises to the cytoplasm. It carries out the reaction [protein]-C-terminal L-amino acid-glycyl-phosphatidylethanolamide + H2O = [protein]-C-terminal L-amino acid-glycine + a 1,2-diacyl-sn-glycero-3-phosphoethanolamine. Cysteine protease that plays a key role in autophagy by mediating both proteolytic activation and delipidation of ATG8 family proteins. The protease activity is required for proteolytic activation of ATG8 family proteins: cleaves the C-terminal amino acid of ATG8 proteins to reveal a C-terminal glycine. Exposure of the glycine at the C-terminus is essential for ATG8 proteins conjugation to phosphatidylethanolamine (PE) and insertion to membranes, which is necessary for autophagy. In addition to the protease activity, also mediates delipidation of ATG8 family proteins. Catalyzes delipidation of PE-conjugated forms of ATG8 proteins during macroautophagy. This is Cysteine protease ATG4C from Xenopus tropicalis (Western clawed frog).